Consider the following 475-residue polypeptide: Equilibrative nucleoside transporter 3 (475 aa).

At 1 to 51 (MAFASEDIAYHSSNAVYRVPSNRHEADQEALLGKPLDYPAPGLQRPEDRFN) the chain is on the cytoplasmic side. At Ser-21 the chain carries Phosphoserine. Positions 31 to 32 (LL) match the Dileucine internalization motif motif. The chain crosses the membrane as a helical span at residues 52-72 (GAYIIFFCLGIGGLLPWNFFV). The Extracellular segment spans residues 73-105 (TAKEYWAFKLRNCSSPASGKDPEDADILNYFES). An N-linked (GlcNAc...) asparagine glycan is attached at Asn-84. A helical membrane pass occupies residues 106-126 (YLAVASTVPSLLFLVANFLLV). The Cytoplasmic segment spans residues 127 to 132 (NRIRVH). Residues 133-153 (VRVLASLSVSLAIFVVMAVLV) traverse the membrane as a helical segment. Residues 154 to 162 (RVDTSSWTR) are Extracellular-facing. Residues 163-183 (GFFSIAMACMAIISSSSTIFN) form a helical membrane-spanning segment. Residues 184-199 (SSVYGLTGSFPMRNAQ) are Cytoplasmic-facing. The helical transmembrane segment at 200–220 (ALISGGAMGGTVSAVASLVDL) threads the bilayer. At 221 to 230 (AASSDVRDSA) the chain is on the extracellular side. A helical membrane pass occupies residues 231–251 (LAFFLTAAVFLGLCVGLYLLL). Residues 252 to 305 (PQLEYARYYMRPVVPIHVFSSEDSPPRDAPSTSSVAPASRAVHTPPLGPILKKT) are Cytoplasmic-facing. The segment at 272-291 (SEDSPPRDAPSTSSVAPASR) is disordered. A helical membrane pass occupies residues 306-326 (AGLGFCAVFLYFITALIFPAI). The Extracellular portion of the chain corresponds to 327–340 (STNIQPMHKGTGSP). Residues 341 to 361 (WTSKFYVPLTVFLLFNFADLC) form a helical membrane-spanning segment. The Cytoplasmic portion of the chain corresponds to 362 to 377 (GRQVTAWIQVPGPRSK). The chain crosses the membrane as a helical span at residues 378 to 398 (LLPILAVSRVCLVPLFLLCNY). At 399-414 (QPRSHLTLVLFQSDIY) the chain is on the extracellular side. A helical transmembrane segment spans residues 415–437 (PILFTCLLGLSNGYLSTLVLMYG). The Cytoplasmic portion of the chain corresponds to 438-450 (PKIVPRELAEATS). Residues 451 to 471 (VVMLFYMSLGLMLGSACAALL) form a helical membrane-spanning segment. Residues 472 to 475 (EHFI) are Extracellular-facing.

Belongs to the SLC29A/ENT transporter (TC 2.A.57) family. As to expression, widely expressed. Highest levels in heart and liver (at protein level).

Its subcellular location is the lysosome membrane. It localises to the late endosome membrane. The protein resides in the mitochondrion membrane. The protein localises to the cell membrane. It catalyses the reaction adenosine(in) = adenosine(out). The catalysed reaction is guanosine(in) = guanosine(out). The enzyme catalyses inosine(in) = inosine(out). It carries out the reaction uridine(out) = uridine(in). It catalyses the reaction cytidine(in) = cytidine(out). The catalysed reaction is thymidine(in) = thymidine(out). The enzyme catalyses 2'-deoxyadenosine(in) = 2'-deoxyadenosine(out). It carries out the reaction 2'-deoxycytidine(in) = 2'-deoxycytidine(out). It catalyses the reaction guanine(out) = guanine(in). The catalysed reaction is uracil(in) = uracil(out). The enzyme catalyses (R)-noradrenaline(out) = (R)-noradrenaline(in). It carries out the reaction dopamine(out) = dopamine(in). It catalyses the reaction serotonin(out) = serotonin(in). The catalysed reaction is tyramine(in) = tyramine(out). The enzyme catalyses ATP(in) = ATP(out). Its function is as follows. Uniporter that mediates the facilitative transport of nucleoside across lysosomal and mitochondrial membranes. Functions as a non-electrogenic Na(+)-independent transporter. Substrate transport is pH-dependent and enhanced under acidic condition, probably reflecting the location of the transporter in acidic intracellular compartments. Proton is not a cotransporting ion but most likely change the ionization state of the transporter which dictates transport-permissible/impermissible conformation for nucleoside translocation. May direct the nucleoside transport from lysosomes to cytosol or cytosol to mitochondria to facilitate the fundamental function of salvage synthesis of nucleic acids. Involved in the transport of nucleosides (adenosine, guanosine, uridine, thymidine, cytidine and inosine) and deoxynucleosides (deoxyadenosine, deoxycytidine). Also mediates transport of purine nucleobases (adenine, guanine) and pyrimidine nucleobases (uracil). Also able to transport monoamine neurotransmitters dopamine, serotonin, noradrenaline and tyramine. Capable of transporting ATP. Mediates nucleoside export from lysosomes in macrophages, which regulates macrophage functions and numbers. This chain is Equilibrative nucleoside transporter 3, found in Rattus norvegicus (Rat).